Consider the following 905-residue polypeptide: Conserved oligomeric Golgi complex subunit 3 (905 aa).

A disordered region spans residues 49 to 78; that stretch reads WRDSGPSAPAPTTPTQVGPTDSSAAATSQS. The segment covering 64-78 has biased composition (polar residues); that stretch reads QVGPTDSSAAATSQS. Phosphoserine occurs at positions 841, 845, 856, 859, and 862. Residues 884 to 905 form a disordered region; it reads VQPPAKIEEEEVTETQTQANSE.

The protein belongs to the COG3 family. As to quaternary structure, component of the conserved oligomeric Golgi complex which is composed of eight different subunits and is required for normal Golgi morphology and localization.

The protein resides in the golgi apparatus membrane. Involved in ER-Golgi transport. This chain is Conserved oligomeric Golgi complex subunit 3 (Cog3), found in Drosophila melanogaster (Fruit fly).